The sequence spans 528 residues: Apolipoprotein N-acyltransferase (528 aa).

5 consecutive transmembrane segments (helical) span residues 8–28, 69–89, 99–119, 178–198, and 203–223; these read IMLL…AVGA, AFWI…WWLG, FAWA…VFYG, VLGL…PALL, and GAKL…GYGA. The CN hydrolase domain occupies 241 to 490; sequence VQPNIDQAAK…EGVENATFTL (250 aa). The active-site Proton acceptor is Glu-285. Lys-349 is an active-site residue. Cys-402 functions as the Nucleophile in the catalytic mechanism.

It belongs to the CN hydrolase family. Apolipoprotein N-acyltransferase subfamily.

The protein resides in the cell inner membrane. The enzyme catalyses N-terminal S-1,2-diacyl-sn-glyceryl-L-cysteinyl-[lipoprotein] + a glycerophospholipid = N-acyl-S-1,2-diacyl-sn-glyceryl-L-cysteinyl-[lipoprotein] + a 2-acyl-sn-glycero-3-phospholipid + H(+). It participates in protein modification; lipoprotein biosynthesis (N-acyl transfer). Its function is as follows. Catalyzes the phospholipid dependent N-acylation of the N-terminal cysteine of apolipoprotein, the last step in lipoprotein maturation. The polypeptide is Apolipoprotein N-acyltransferase (Allorhizobium ampelinum (strain ATCC BAA-846 / DSM 112012 / S4) (Agrobacterium vitis (strain S4))).